Reading from the N-terminus, the 327-residue chain is Putative HTH-type transcriptional regulatory protein MM_0444 (327 aa).

Residues 132 to 190 form the HTH cro/C1-type domain; the sequence is LKKARTTQSMSLGTLASMVGVSRRTISKYEEEGMDASIDVVLHLEDIFGVELAKPIDIL. Positions 143–162 form a DNA-binding region, H-T-H motif; it reads LGTLASMVGVSRRTISKYEE. Residues 195–214 form a disordered region; that stretch reads SRKPRKKAEPEKEEPKGKPG. The span at 201–211 shows a compositional bias: basic and acidic residues; sequence KAEPEKEEPKG.

This chain is Putative HTH-type transcriptional regulatory protein MM_0444, found in Methanosarcina mazei (strain ATCC BAA-159 / DSM 3647 / Goe1 / Go1 / JCM 11833 / OCM 88) (Methanosarcina frisia).